Consider the following 1040-residue polypeptide: Multidrug resistance protein MdtB (1040 aa).

Transmembrane regions (helical) follow at residues 25-45 (LLMAAILLAGIIGYRFLPVAA), 347-367 (LMLAIALVVMIIYLFLRNIPA), 369-389 (IIPGVAVPLSLIGTFAVMVFL), 396-416 (LTLMALTIATGFVVDDAIVVI), 440-460 (IGFTIISLTFSLIAVLIPLLF), 472-492 (FAVTLAVAILISAVVSLTLTP), 537-557 (WLTLSVAFATLLLSVMLWIVI), 863-883 (LGSTVWLIVAAVVAMYIVLGV), 888-908 (FIHPITILSTLPTAGVGALLA), 910-930 (IIAGSELDIIAIIGIILLIGI), 968-988 (ILMTTLAALLGALPLMLSTGV), and 998-1018 (IAMVGGLLVSQVLTLFTTPVI).

The protein belongs to the resistance-nodulation-cell division (RND) (TC 2.A.6) family. MdtB subfamily. Part of a tripartite efflux system composed of MdtA, MdtB and MdtC. MdtB forms a heteromultimer with MdtC.

The protein localises to the cell inner membrane. In Salmonella paratyphi A (strain ATCC 9150 / SARB42), this protein is Multidrug resistance protein MdtB.